Reading from the N-terminus, the 93-residue chain is Small ribosomal subunit protein uS19 (93 aa).

The protein belongs to the universal ribosomal protein uS19 family.

Protein S19 forms a complex with S13 that binds strongly to the 16S ribosomal RNA. The polypeptide is Small ribosomal subunit protein uS19 (Leptospira borgpetersenii serovar Hardjo-bovis (strain JB197)).